Reading from the N-terminus, the 461-residue chain is METLFNGTLSLGGRDQETTGFAWWAGNARLTNLSGKLLGAHVAHAGLIVFWAGAMNLFEVAHFVPEKPMYEQGLILLPHLATLGWGVGPGGEVIDTFPYFVSGVLHLVSSAVLGFGGIYHALIGPETLEESFPFFGYVWKDKSKMTTILGIHLILLGAGAFLLVLKSVYFGGVYDTWAPGGGDVRKITNLTLSPSILFGYLLKSPFGGEGWIISVDNLEDIIGGHVWLGSICIFGGIWHILTKPFAWARRAFVWSGEAYLSYSLGALSIFGFTACCFVWFNNTAYPSEFYGPTGPEASQAQAFTFLVRDQRLGASIGSAQGPTGLGKYLMRSPTGEIIFGGETMRFWDLRAPWLEPLRGPNGLDLNKLRRDIQPWQERRSAEYMTHAPLGSLNSVGGVATEINAVNYVSPRSWLATSHFVLGFFFFVGHLWHAGRARAAAAGFEKGIDRDTEPVLSMTPLN.

Residues 1-2 (ME) constitute a propeptide that is removed on maturation. Thr-3 carries the N-acetylthreonine modification. Thr-3 is subject to Phosphothreonine. 5 helical membrane-spanning segments follow: residues 57–81 (LFEV…PHLA), 122–143 (LIGP…KDKS), 166–188 (KSVY…RKIT), 243–263 (KPFA…LSYS), and 279–300 (WFNN…ASQA). [CaMn4O5] cluster is bound at residue Glu-355. Residues 435-459 (RARAAAAGFEKGIDRDTEPVLSMTP) traverse the membrane as a helical segment.

It belongs to the PsbB/PsbC family. PsbC subfamily. As to quaternary structure, PSII is composed of 1 copy each of membrane proteins PsbA, PsbB, PsbC, PsbD, PsbE, PsbF, PsbH, PsbI, PsbJ, PsbK, PsbL, PsbM, PsbT, PsbX, PsbY, PsbZ, Psb30/Ycf12, at least 3 peripheral proteins of the oxygen-evolving complex and a large number of cofactors. It forms dimeric complexes. Requires Binds multiple chlorophylls and provides some of the ligands for the Ca-4Mn-5O cluster of the oxygen-evolving complex. It may also provide a ligand for a Cl- that is required for oxygen evolution. PSII binds additional chlorophylls, carotenoids and specific lipids. as cofactor.

Its subcellular location is the plastid. It is found in the chloroplast thylakoid membrane. One of the components of the core complex of photosystem II (PSII). It binds chlorophyll and helps catalyze the primary light-induced photochemical processes of PSII. PSII is a light-driven water:plastoquinone oxidoreductase, using light energy to abstract electrons from H(2)O, generating O(2) and a proton gradient subsequently used for ATP formation. In Psilotum nudum (Whisk fern), this protein is Photosystem II CP43 reaction center protein.